The primary structure comprises 429 residues: Glutamate-1-semialdehyde 2,1-aminomutase 2 (429 aa).

Position 268 is an N6-(pyridoxal phosphate)lysine (Lys-268).

This sequence belongs to the class-III pyridoxal-phosphate-dependent aminotransferase family. HemL subfamily. As to quaternary structure, homodimer. Pyridoxal 5'-phosphate is required as a cofactor.

It localises to the cytoplasm. It carries out the reaction (S)-4-amino-5-oxopentanoate = 5-aminolevulinate. It functions in the pathway porphyrin-containing compound metabolism; protoporphyrin-IX biosynthesis; 5-aminolevulinate from L-glutamyl-tRNA(Glu): step 2/2. In Bacillus anthracis (strain A0248), this protein is Glutamate-1-semialdehyde 2,1-aminomutase 2.